The chain runs to 113 residues: RING-box protein 2 (113 aa).

The tract at residues 1 to 26 (MADVEDGEEPCVLSSHSGSAGSKSGG) is disordered. The residue at position 2 (Ala-2) is an N-acetylalanine. The Zn(2+) site is built by Cys-50, Cys-53, Cys-61, Cys-64, Cys-73, Cys-80, His-82, His-85, Cys-87, Cys-88, Cys-99, and Cys-102. Residues 61–103 (CLRCQAENKQEDCVVVWGECNHSFHNCCMSLWVKQNNRCPLCQ) form an RING-type zinc finger.

It belongs to the RING-box family. Catalytic component of multiple cullin-5-RING E3 ubiquitin-protein ligase complexes (ECS complexes, also named CRL5 complexes) composed of CUL5, Elongin BC (ELOB and ELOC), RNF7/RBX2 and a variable SOCS box domain-containing protein as substrate-specific recognition component. Also interacts (with lower preference) with CUL1, CUL2, CUL3, CUL4A and CUL4B; additional evidence is however required to confirm this result in vivo. Interacts with UBE2F. Interacts with CSNK2B, the interaction is not affected by phosphorylation by CK2. May also interact with DCUN1D1, DCUN1D2, DCUN1D3, DCUN1D4 and DCUN1D5.

It localises to the cytoplasm. Its subcellular location is the nucleus. The catalysed reaction is S-ubiquitinyl-[E2 ubiquitin-conjugating enzyme]-L-cysteine + [acceptor protein]-L-lysine = [E2 ubiquitin-conjugating enzyme]-L-cysteine + N(6)-ubiquitinyl-[acceptor protein]-L-lysine.. The enzyme catalyses S-[NEDD8-protein]-yl-[E2 NEDD8-conjugating enzyme]-L-cysteine + [cullin]-L-lysine = [E2 NEDD8-conjugating enzyme]-L-cysteine + N(6)-[NEDD8-protein]-yl-[cullin]-L-lysine.. The protein operates within protein modification; protein ubiquitination. Its pathway is protein modification; protein neddylation. Functionally, catalytic component of multiple cullin-5-RING E3 ubiquitin-protein ligase complexes (ECS complexes), which mediate the ubiquitination and subsequent proteasomal degradation of target proteins. It is thereby involved in various biological processes, such as cell cycle progression, signal transduction and transcription. The functional specificity of the E3 ubiquitin-protein ligase ECS complexes depend on the variable SOCS box-containing substrate recognition component. Within ECS complexes, RNF7/RBX2 recruits the E2 ubiquitination enzyme to the complex via its RING-type and brings it into close proximity to the substrate. Catalytic subunit of various SOCS-containing ECS complexes, such as the ECS(SOCS7) complex, that regulate reelin signaling by mediating ubiquitination and degradation of DAB1. The ECS(SOCS2) complex mediates the ubiquitination and subsequent proteasomal degradation of phosphorylated EPOR and GHR. Promotes ubiquitination and degradation of NF1, thereby regulating Ras protein signal transduction. As part of the ECS(ASB9) complex, catalyzes ubiquitination and degradation of CKB. The ECS(SPSB3) complex catalyzes ubiquitination of nuclear CGAS. As part of the ECS(RAB40C) complex, mediates ANKRD28 ubiquitination and degradation, thereby inhibiting protein phosphatase 6 (PP6) complex activity and focal adhesion assembly during cell migration. As part of some ECS complex, catalyzes 'Lys-11'-linked ubiquitination and degradation of BTRC. ECS complexes and ARIH2 collaborate in tandem to mediate ubiquitination of target proteins; ARIH2 mediating addition of the first ubiquitin on CRLs targets. Specifically catalyzes the neddylation of CUL5 via its interaction with UBE2F. Does not catalyze neddylation of other cullins (CUL1, CUL2, CUL3, CUL4A or CUL4B). May play a role in protecting cells from apoptosis induced by redox agents. The chain is RING-box protein 2 from Mus musculus (Mouse).